The sequence spans 950 residues: Glycine dehydrogenase (decarboxylating) (950 aa).

K698 carries the post-translational modification N6-(pyridoxal phosphate)lysine.

It belongs to the GcvP family. The glycine cleavage system is composed of four proteins: P, T, L and H. Pyridoxal 5'-phosphate is required as a cofactor.

It catalyses the reaction N(6)-[(R)-lipoyl]-L-lysyl-[glycine-cleavage complex H protein] + glycine + H(+) = N(6)-[(R)-S(8)-aminomethyldihydrolipoyl]-L-lysyl-[glycine-cleavage complex H protein] + CO2. Functionally, the glycine cleavage system catalyzes the degradation of glycine. The P protein binds the alpha-amino group of glycine through its pyridoxal phosphate cofactor; CO(2) is released and the remaining methylamine moiety is then transferred to the lipoamide cofactor of the H protein. This chain is Glycine dehydrogenase (decarboxylating), found in Neisseria meningitidis serogroup C / serotype 2a (strain ATCC 700532 / DSM 15464 / FAM18).